The chain runs to 142 residues: Large ribosomal subunit protein uL13 (142 aa).

This sequence belongs to the universal ribosomal protein uL13 family. In terms of assembly, part of the 50S ribosomal subunit.

Its function is as follows. This protein is one of the early assembly proteins of the 50S ribosomal subunit, although it is not seen to bind rRNA by itself. It is important during the early stages of 50S assembly. The protein is Large ribosomal subunit protein uL13 of Syntrophobacter fumaroxidans (strain DSM 10017 / MPOB).